We begin with the raw amino-acid sequence, 674 residues long: CRS2-associated factor 1, chloroplastic (674 aa).

The N-terminal 54 residues, 1–54, are a transit peptide targeting the chloroplast; that stretch reads MATARLPSRSFLSPAQQSYPRLPASVRLCLSHHEQPPTGPKRHRRAATSHPAFS. The disordered stretch occupies residues 31–61; the sequence is SHHEQPPTGPKRHRRAATSHPAFSAAARGRA. Low complexity predominate over residues 48–57; the sequence is TSHPAFSAAA. 2 consecutive CRM domains span residues 183 to 279 and 301 to 397; these read EPLT…TRPC and GGLT…LPPL. Residues 554–576 are CRS2 binding; it reads GLLCLLEQAIHSGRALVLSEDEL.

Interacts with CRS2 and RNA. Part of large ribonucleo-protein complexes that include group IIB introns, CRS2 and CAF1.

Its subcellular location is the plastid. The protein localises to the chloroplast stroma. Functionally, required for the splicing of group IIB introns in chloroplasts. Forms splicing particles with CRS2. Interacts with RNA and confers intron specificity of the splicing particles. This is CRS2-associated factor 1, chloroplastic (CAF1) from Zea mays (Maize).